A 457-amino-acid polypeptide reads, in one-letter code: Argininosuccinate lyase (457 aa).

The protein belongs to the lyase 1 family. Argininosuccinate lyase subfamily.

Its subcellular location is the cytoplasm. The enzyme catalyses 2-(N(omega)-L-arginino)succinate = fumarate + L-arginine. It functions in the pathway amino-acid biosynthesis; L-arginine biosynthesis; L-arginine from L-ornithine and carbamoyl phosphate: step 3/3. This is Argininosuccinate lyase from Pasteurella multocida (strain Pm70).